The following is a 177-amino-acid chain: Neuroblastoma suppressor of tumorigenicity 1 (177 aa).

Positions 1 to 16 (MLWFVVGALFPALLLA) are cleaved as a signal peptide. Cystine bridges form between Cys34-Cys84, Cys48-Cys98, Cys58-Cys117, Cys62-Cys119, and Cys81-Cys122. The region spanning 34 to 123 (CEAKNITQIV…ILHCSCQACG (90 aa)) is the CTCK domain. Residues 143–177 (MPAEGPGPHHYAHHQQEVEEPPASSHHHHEEEGDE) are disordered.

The protein belongs to the DAN family.

The protein resides in the secreted. Functionally, may act as a tumor suppressor. The polypeptide is Neuroblastoma suppressor of tumorigenicity 1 (NBL1) (Gallus gallus (Chicken)).